The following is a 288-amino-acid chain: MASRKLRDQIVIATKFTTDYKGYDVGKGKSANFCGNHKRSLHVSVRDSLRKLQTDWIDILYVHWWDYMSSIEEVMDSLHILVQQGKVLYLGVSDTPAWVVSAANYYATSHGKTPFSIYQGKWNVLNRDFERDIIPMARHFGMALAPWDVMGGGRFQSKKAVEERKKKGEGLRTFFGTSEQTDMEVKISEALLKVAEEHGTESVTAIAIAYVRSKAKHVFPLVGGRKIEHLKQNIEALSIKLTPEQIKYLESIVPFDVGFPTNFIGDDPAVTKKPSFLTEMSAKISFED.

This sequence belongs to the aldo/keto reductase family. Aldo/keto reductase 2 subfamily.

The chain is Putative aryl-alcohol dehydrogenase AAD10 (AAD10) from Saccharomyces cerevisiae (strain ATCC 204508 / S288c) (Baker's yeast).